The sequence spans 629 residues: Embryonic polyadenylate-binding protein B (629 aa).

RRM domains lie at 11–89 (ASLY…WSQR), 99–175 (GNVF…HFKS), 191–268 (TNVY…RAQK), and 294–370 (VNLY…LAQR). Residues 539–616 (QEPLTASLLA…AVAVLQAHQA (78 aa)) enclose the PABC domain.

It belongs to the polyadenylate-binding protein type-1 family. As to quaternary structure, interacts with dazl in an RNA-independent manner. The C-terminus can self-associate and also interact with the C-terminus of pabpc1, independently of RNA. RRM 1 and RRM 2 interact with both eif4g1 and paip1, and the C-terminus also interacts with paip1. Prior to oocyte maturation, found in a complex with dazl and pum2 proteins and spdy1 mRNA; pum2 dissociates from the complex during maturation. Interacts with the translation termination factor sup35/erf3.

The protein resides in the cytoplasm. In terms of biological role, binds and protects the poly(A) tail of mRNA with or without an AU-rich element (ARE) and prevents mRNA deadenylation. Stimulates the translation of mRNAs to which it is bound during early development. The chain is Embryonic polyadenylate-binding protein B (epabp-b) from Xenopus laevis (African clawed frog).